Consider the following 120-residue polypeptide: NAD(P)H-quinone oxidoreductase subunit 3, chloroplastic (120 aa).

The next 3 helical transmembrane spans lie at 9–29 (IFWAFLIISSAIPILAFLISG), 64–84 (MFALVFVVFDVETVFLYPWAM), and 88–108 (VLGVPVFIEAFIFVLILIVGS).

It belongs to the complex I subunit 3 family. As to quaternary structure, NDH is composed of at least 16 different subunits, 5 of which are encoded in the nucleus.

The protein localises to the plastid. It localises to the chloroplast thylakoid membrane. The enzyme catalyses a plastoquinone + NADH + (n+1) H(+)(in) = a plastoquinol + NAD(+) + n H(+)(out). It catalyses the reaction a plastoquinone + NADPH + (n+1) H(+)(in) = a plastoquinol + NADP(+) + n H(+)(out). Functionally, NDH shuttles electrons from NAD(P)H:plastoquinone, via FMN and iron-sulfur (Fe-S) centers, to quinones in the photosynthetic chain and possibly in a chloroplast respiratory chain. The immediate electron acceptor for the enzyme in this species is believed to be plastoquinone. Couples the redox reaction to proton translocation, and thus conserves the redox energy in a proton gradient. This is NAD(P)H-quinone oxidoreductase subunit 3, chloroplastic from Gossypium hirsutum (Upland cotton).